Reading from the N-terminus, the 455-residue chain is Argininosuccinate lyase (455 aa).

It belongs to the lyase 1 family. Argininosuccinate lyase subfamily.

The protein localises to the cytoplasm. It catalyses the reaction 2-(N(omega)-L-arginino)succinate = fumarate + L-arginine. The protein operates within amino-acid biosynthesis; L-arginine biosynthesis; L-arginine from L-ornithine and carbamoyl phosphate: step 3/3. The protein is Argininosuccinate lyase of Shewanella sp. (strain MR-7).